The sequence spans 674 residues: Translation factor GUF1, mitochondrial (674 aa).

Residues 1–33 constitute a mitochondrion transit peptide; it reads MLRPWFCFRSCVSLLSNRRQYGFRYLATAEPSK. A disordered region spans residues 32–51; the sequence is SKSEKPAKPVKPAKPMSVQE. One can recognise a tr-type G domain in the interval 75–257; it reads QNYRNFSIVA…SIIKNIPAPV (183 aa). GTP-binding positions include 84–91, 150–154, and 204–207; these read AHVDHGKS, DTPGH, and NKID.

Belongs to the TRAFAC class translation factor GTPase superfamily. Classic translation factor GTPase family. LepA subfamily.

The protein localises to the mitochondrion inner membrane. The catalysed reaction is GTP + H2O = GDP + phosphate + H(+). Functionally, promotes mitochondrial protein synthesis. May act as a fidelity factor of the translation reaction, by catalyzing a one-codon backward translocation of tRNAs on improperly translocated ribosomes. Binds to mitochondrial ribosomes in a GTP-dependent manner. This Lodderomyces elongisporus (strain ATCC 11503 / CBS 2605 / JCM 1781 / NBRC 1676 / NRRL YB-4239) (Yeast) protein is Translation factor GUF1, mitochondrial.